We begin with the raw amino-acid sequence, 376 residues long: UDP-N-acetylglucosamine--N-acetylmuramyl-(pentapeptide) pyrophosphoryl-undecaprenol N-acetylglucosamine transferase (376 aa).

UDP-N-acetyl-alpha-D-glucosamine-binding positions include T11 to G13, N117, R160, S208, and Q310.

The protein belongs to the glycosyltransferase 28 family. MurG subfamily.

The protein localises to the cell inner membrane. It carries out the reaction di-trans,octa-cis-undecaprenyl diphospho-N-acetyl-alpha-D-muramoyl-L-alanyl-D-glutamyl-meso-2,6-diaminopimeloyl-D-alanyl-D-alanine + UDP-N-acetyl-alpha-D-glucosamine = di-trans,octa-cis-undecaprenyl diphospho-[N-acetyl-alpha-D-glucosaminyl-(1-&gt;4)]-N-acetyl-alpha-D-muramoyl-L-alanyl-D-glutamyl-meso-2,6-diaminopimeloyl-D-alanyl-D-alanine + UDP + H(+). It functions in the pathway cell wall biogenesis; peptidoglycan biosynthesis. Functionally, cell wall formation. Catalyzes the transfer of a GlcNAc subunit on undecaprenyl-pyrophosphoryl-MurNAc-pentapeptide (lipid intermediate I) to form undecaprenyl-pyrophosphoryl-MurNAc-(pentapeptide)GlcNAc (lipid intermediate II). This Rickettsia africae (strain ESF-5) protein is UDP-N-acetylglucosamine--N-acetylmuramyl-(pentapeptide) pyrophosphoryl-undecaprenol N-acetylglucosamine transferase.